A 120-amino-acid polypeptide reads, in one-letter code: MNAEQIIKSIEAEHLKPNLPVIHVGDTVRVGVRIIEGGKERVQPYEGTIIAMGNSGINKTITVRRVFQGVGVERVFLLHSPRIANIQVIRRGKVRRAKLYYLRDRVGKATRIQQRFDRPL.

Belongs to the bacterial ribosomal protein bL19 family.

Functionally, this protein is located at the 30S-50S ribosomal subunit interface and may play a role in the structure and function of the aminoacyl-tRNA binding site. The chain is Large ribosomal subunit protein bL19 from Gloeothece citriformis (strain PCC 7424) (Cyanothece sp. (strain PCC 7424)).